The following is a 33-amino-acid chain: Gastrin (33 aa).

2 positions are modified to pyrrolidone carboxylic acid: Gln1 and Gln18. Tyr28 carries the post-translational modification Sulfotyrosine. At Phe33 the chain carries Phenylalanine amide.

Belongs to the gastrin/cholecystokinin family.

Its subcellular location is the secreted. In terms of biological role, gastrin stimulates the stomach mucosa to produce and secrete hydrochloric acid and the pancreas to secrete its digestive enzymes. It also stimulates smooth muscle contraction and increases blood circulation and water secretion in the stomach and intestine. In Didelphis virginiana (North American opossum), this protein is Gastrin (GAST).